Reading from the N-terminus, the 82-residue chain is Penaeidin-3f (82 aa).

The first 19 residues, 1 to 19 (MRLVACLVFLASFALVCQG), serve as a signal peptide directing secretion. Position 20 is a pyrrolidone carboxylic acid (Gln20). Intrachain disulfides connect Cys51/Cys66, Cys55/Cys73, and Cys67/Cys74. Ser81 carries the serine amide modification.

This sequence belongs to the penaeidin family.

It localises to the cytoplasmic granule. Antibacterial and antifungal activity. Presents chitin-binding activity. This is Penaeidin-3f from Penaeus vannamei (Whiteleg shrimp).